A 301-amino-acid polypeptide reads, in one-letter code: tRNA-cytidine(32) 2-sulfurtransferase (301 aa).

Residues 47–52 (SGGKDS) carry the PP-loop motif motif. The [4Fe-4S] cluster site is built by Cys-122, Cys-125, and Cys-213.

This sequence belongs to the TtcA family. As to quaternary structure, homodimer. Requires Mg(2+) as cofactor. The cofactor is [4Fe-4S] cluster.

The protein resides in the cytoplasm. The catalysed reaction is cytidine(32) in tRNA + S-sulfanyl-L-cysteinyl-[cysteine desulfurase] + AH2 + ATP = 2-thiocytidine(32) in tRNA + L-cysteinyl-[cysteine desulfurase] + A + AMP + diphosphate + H(+). It participates in tRNA modification. In terms of biological role, catalyzes the ATP-dependent 2-thiolation of cytidine in position 32 of tRNA, to form 2-thiocytidine (s(2)C32). The sulfur atoms are provided by the cysteine/cysteine desulfurase (IscS) system. This chain is tRNA-cytidine(32) 2-sulfurtransferase, found in Photobacterium profundum (strain SS9).